We begin with the raw amino-acid sequence, 255 residues long: Probable transcriptional regulatory protein CMS0715 (255 aa).

It belongs to the TACO1 family.

The protein resides in the cytoplasm. The polypeptide is Probable transcriptional regulatory protein CMS0715 (Clavibacter sepedonicus (Clavibacter michiganensis subsp. sepedonicus)).